The primary structure comprises 1755 residues: Transposon Ty1-JR2 Gag-Pol polyprotein (1755 aa).

Residues 1–16 (MESQQLSQHSHISHGS) are compositionally biased toward low complexity. Disordered stretches follow at residues 1-93 (MESQ…MMTQ), 126-173 (PQSQ…RPPP), and 352-421 (GSRN…SKST). Composition is skewed to polar residues over residues 48-60 (TKANSQQTTTPAS), 71-93 (SPQTAQSHSPQNGPYPQQCMMTQ), and 127-152 (QSQFPQYPSSVGTPLSTPSPESGNTF). The segment covering 153–165 (TDSSSADSDMTST) has biased composition (low complexity). The RNA-binding stretch occupies residues 299–401 (NNGIHINNKV…NSKSKTARAH (103 aa)). Low complexity predominate over residues 402-418 (NVSTSNNSPSTDNDSIS). S416 carries the post-translational modification Phosphoserine. The For protease activity; shared with dimeric partner role is filled by D461. The integrase-type zinc finger-like stretch occupies residues 583–640 (NVHTSESTRKYPYPFIHRMLAHANAQTIRYSLKNNTITYFNESDVDWSSAIDYQCPDC). Residues 660-835 (NSYEPFQYLH…AGLDISTLLP (176 aa)) form the Integrase catalytic domain. Positions 671 and 736 each coordinate Mg(2+). Disordered regions lie at residues 956 to 1087 (SKAV…ETEK), 1092 to 1111 (RSPSIDASPPENNSSHNIVP), and 1130 to 1186 (DLPL…EDNE). Over residues 960-969 (SPTDSTPPST) the composition is skewed to low complexity. Residues 1005-1015 (STPQISNIEST) are compositionally biased toward polar residues. Residues 1038–1053 (ESSHASKSKDFRHSDS) are compositionally biased toward basic and acidic residues. Polar residues-rich tracts occupy residues 1054–1082 (YSENETNHTNVPISSTGGTNNKTVPQISD) and 1101–1111 (PENNSSHNIVP). The Bipartite nuclear localization signal signature appears at 1178–1212 (KKRSLEDNETEIKVSRDTWNTKNMRSLEPPRSKKR). The 139-residue stretch at 1338 to 1476 (NNYYITQLDI…DILGLEIKYQ (139 aa)) folds into the Reverse transcriptase Ty1/copia-type domain. Residues D1346, D1427, D1428, D1610, E1652, and D1685 each coordinate Mg(2+). Residues 1610–1752 (DASYGNQPYY…IKTFKLLTNK (143 aa)) form the RNase H Ty1/copia-type domain.

As to quaternary structure, the capsid protein forms a homotrimer, from which the VLPs are assembled. The protease is a homodimer, whose active site consists of two apposed aspartic acid residues. In terms of processing, initially, virus-like particles (VLPs) are composed of the structural unprocessed proteins Gag and Gag-Pol, and also contain the host initiator methionine tRNA (tRNA(i)-Met) which serves as a primer for minus-strand DNA synthesis, and a dimer of genomic Ty RNA. Processing of the polyproteins occurs within the particle and proceeds by an ordered pathway, called maturation. First, the protease (PR) is released by autocatalytic cleavage of the Gag-Pol polyprotein yielding capsid protein p45 and a Pol-p154 precursor protein. This cleavage is a prerequisite for subsequent processing of Pol-p154 at the remaining sites to release the mature structural and catalytic proteins. Maturation takes place prior to the RT reaction and is required to produce transposition-competent VLPs.

The protein resides in the cytoplasm. It localises to the nucleus. The catalysed reaction is DNA(n) + a 2'-deoxyribonucleoside 5'-triphosphate = DNA(n+1) + diphosphate. It carries out the reaction Endonucleolytic cleavage to 5'-phosphomonoester.. Functionally, capsid protein (CA) is the structural component of the virus-like particle (VLP), forming the shell that encapsulates the retrotransposons dimeric RNA genome. The particles are assembled from trimer-clustered units and there are holes in the capsid shells that allow for the diffusion of macromolecules. CA also has nucleocapsid-like chaperone activity, promoting primer tRNA(i)-Met annealing to the multipartite primer-binding site (PBS), dimerization of Ty1 RNA and initiation of reverse transcription. In terms of biological role, the aspartyl protease (PR) mediates the proteolytic cleavages of the Gag and Gag-Pol polyproteins after assembly of the VLP. Reverse transcriptase/ribonuclease H (RT) is a multifunctional enzyme that catalyzes the conversion of the retro-elements RNA genome into dsDNA within the VLP. The enzyme displays a DNA polymerase activity that can copy either DNA or RNA templates, and a ribonuclease H (RNase H) activity that cleaves the RNA strand of RNA-DNA heteroduplexes during plus-strand synthesis and hydrolyzes RNA primers. The conversion leads to a linear dsDNA copy of the retrotransposon that includes long terminal repeats (LTRs) at both ends. Its function is as follows. Integrase (IN) targets the VLP to the nucleus, where a subparticle preintegration complex (PIC) containing at least integrase and the newly synthesized dsDNA copy of the retrotransposon must transit the nuclear membrane. Once in the nucleus, integrase performs the integration of the dsDNA into the host genome. In Saccharomyces cerevisiae (strain ATCC 204508 / S288c) (Baker's yeast), this protein is Transposon Ty1-JR2 Gag-Pol polyprotein (TY1B-JR2).